The chain runs to 268 residues: Helix-loop-helix protein 25 (268 aa).

Polar residues predominate over residues 1–23 (MPKVIQSSMSDYRSVPYNQTPKS). The segment at 1–29 (MPKVIQSSMSDYRSVPYNQTPKSASERKR) is disordered. Residues 92-105 (ERRKVKTEREKIRR) form a basic motif region. Residues 92 to 149 (ERRKVKTEREKIRRKKQDDCYAELKFFILNKQMGSYEQRLKLERITILEIIIDYIKHN) form the bHLH domain. Residues 106 to 149 (KKQDDCYAELKFFILNKQMGSYEQRLKLERITILEIIIDYIKHN) form a helix-loop-helix motif region.

It is found in the nucleus. In terms of biological role, probable transcription factor. Modulates lifespan and also recovery from the developmentally arrested larval state known as dauer, perhaps acting upstream of phosphatase PTEN/daf-18. Regulates expression of genes involved in cell division, cell-cycle regulation, and sexual reproduction, including daf-18. This Caenorhabditis elegans protein is Helix-loop-helix protein 25.